A 192-amino-acid polypeptide reads, in one-letter code: Probable molybdenum cofactor guanylyltransferase (192 aa).

GTP is bound by residues Leu-8–Gly-10, Lys-20, Asp-69, and Asp-94. Asp-94 contributes to the Mg(2+) binding site.

The protein belongs to the MobA family. Requires Mg(2+) as cofactor.

It is found in the cytoplasm. It carries out the reaction Mo-molybdopterin + GTP + H(+) = Mo-molybdopterin guanine dinucleotide + diphosphate. In terms of biological role, transfers a GMP moiety from GTP to Mo-molybdopterin (Mo-MPT) cofactor (Moco or molybdenum cofactor) to form Mo-molybdopterin guanine dinucleotide (Mo-MGD) cofactor. This chain is Probable molybdenum cofactor guanylyltransferase, found in Pyrococcus horikoshii (strain ATCC 700860 / DSM 12428 / JCM 9974 / NBRC 100139 / OT-3).